The chain runs to 273 residues: Flagellin FljO (273 aa).

The protein belongs to the bacterial flagellin family. In terms of assembly, in C.crescentus, the flagellar filament is composed of multiple flagellins of 29 kDa; 27 kDa and 25 kDa.

Its subcellular location is the secreted. It is found in the bacterial flagellum. Flagellin is the subunit protein which polymerizes to form the filaments of bacterial flagella. The sequence is that of Flagellin FljO (fljO) from Caulobacter vibrioides (strain ATCC 19089 / CIP 103742 / CB 15) (Caulobacter crescentus).